The chain runs to 239 residues: MSRDPILSLPWPDARPLPDTFFDRDALLVARELLGKVIRHRQGNLWLAARIIETEAYYLEEKGSHASLGYTEKRKALFLDGGHIYMYYARGGDSLNFSAGGPGNAVLIKSGHPWLDRISDHTALERMQSLNPDSQGRPREIGRLCAGQTLLCKAMGLKVPEWDAQRFDPQRLFVDDVGERPSQVIQAARLGIPKGRDEHLPYRFVDATFAAFCTRNPLRRGQVAGRDYHLLGHQDPHLQ.

It belongs to the DNA glycosylase MPG family.

The polypeptide is Putative 3-methyladenine DNA glycosylase (Pseudomonas aeruginosa (strain LESB58)).